The following is a 280-amino-acid chain: Killer cell lectin-like receptor 7 (280 aa).

At 1-44 (MSEQEVTYSTVRFHESSRLQKLVRTEEPQRPREACYREYSVPWK) the chain is on the cytoplasmic side. A helical; Signal-anchor for type II membrane protein transmembrane segment spans residues 45–66 (LIVIACGILCFLLLVTVALLAI). Over 67–280 (TIFQHSQQKH…CGKRLDKFPH (214 aa)) the chain is Extracellular. An N-linked (GlcNAc...) asparagine glycan is attached at Asn-104. A C-type lectin domain is found at 156–275 (GFEKYWFCYG…SYICICGKRL (120 aa)). Intrachain disulfides connect Cys-163–Cys-168, Cys-181–Cys-269, Cys-185–Cys-271, and Cys-250–Cys-263. The N-linked (GlcNAc...) asparagine glycan is linked to Asn-239.

Homodimer; disulfide-linked.

Its subcellular location is the membrane. Its function is as follows. Receptor on natural killer (NK) cells for class I MHC. This Mus musculus (Mouse) protein is Killer cell lectin-like receptor 7 (Klra7).